The following is a 191-amino-acid chain: Cdc42 homolog (191 aa).

10-17 (GDGAVGKT) contacts GTP. The short motif at 32–40 (YVPTVFDNY) is the Effector region element. Residues 57–61 (DTAGQ) and 115–118 (TQID) each bind GTP. A Cysteine methyl ester modification is found at cysteine 188. Cysteine 188 carries the S-geranylgeranyl cysteine lipid modification. Residues 189-191 (KFL) constitute a propeptide, removed in mature form.

The protein belongs to the small GTPase superfamily. Rho family. CDC42 subfamily.

The protein resides in the cell junction. It localises to the adherens junction. Its subcellular location is the cell membrane. Functionally, regulates mbt kinase activity and is also required to recruit mbt to adherens junctions. Together with mbt, regulates photoreceptor cell morphogenesis. The sequence is that of Cdc42 homolog from Aedes aegypti (Yellowfever mosquito).